A 240-amino-acid polypeptide reads, in one-letter code: MRYGLSAQRSLINVCSRRFFGKDAKEQFLKNLSSIPASKHPRLVSDSDANSAMSVLIPLVTVDGRDSVLLTKRSIHLRSHRGEVCFPGGRMDPGETTTETALRETFEEIGVNAESVEIWGHLKSVIRRQADFNVTPIVGYISDERVLENLVVNSDEVQAVFTIPIDELIKKAGLTKFQSKRMKYTLPSFDSTEFKVHHNAPNEYLHSTQRVWGLSGVMLHQALTLLNPDVYKHDLIVKFF.

The Nudix hydrolase domain maps to 50–190; that stretch reads NSAMSVLIPL…RMKYTLPSFD (141 aa). The Nudix box signature appears at 89-110; the sequence is GRMDPGETTTETALRETFEEIG. Residues E104 and E108 each contribute to the Mg(2+) site.

Belongs to the Nudix hydrolase family. PCD1 subfamily. The cofactor is Mn(2+). Mg(2+) serves as cofactor.

Functionally, probably mediates the hydrolysis of some nucleoside diphosphate derivatives. The protein is Nudix hydrolase 3 (ndx-3) of Caenorhabditis elegans.